Here is an 894-residue protein sequence, read N- to C-terminus: Histone-lysine N-methyltransferase EZ2 (894 aa).

Over residues 1 to 11 the composition is skewed to low complexity; it reads MASSSKASDSS. Disordered stretches follow at residues 1–25, 395–447, and 491–513; these read MASS…GKDA, SSVS…KRQK, and KKTS…VGRQ. Over residues 395–421 the composition is skewed to polar residues; the sequence is SSVSAEESTTTPSADISETENVSSDLP. The segment covering 425–435 has biased composition (basic residues); sequence LRKHKISKHGP. The span at 503-513 shows a compositional bias: polar residues; the sequence is PATTMENVGRQ. In terms of domain architecture, SANT spans 527–577; it reads TLSCWSALERDLYLKGIEIFGKNSCLIARNLLSGLKTCIEVANYMYNNGAA. Positions 627–731 constitute a CXC domain; it reads AGHPTVRKRT…SLGEPLARGD (105 aa). The SET domain maps to 746 to 861; the sequence is QRILLGRSDV…ASEELFYDYR (116 aa). Residues 867 to 894 form a disordered region; it reads APAWARRPEGSKKDEASVSHRRAHKVAR. A compositionally biased stretch (basic and acidic residues) spans 872-884; sequence RRPEGSKKDEASV. Residues 885-894 show a composition bias toward basic residues; sequence SHRRAHKVAR.

The protein belongs to the class V-like SAM-binding methyltransferase superfamily. Histone-lysine methyltransferase family. EZ subfamily.

The protein localises to the nucleus. It carries out the reaction L-lysyl(27)-[histone H3] + 3 S-adenosyl-L-methionine = N(6),N(6),N(6)-trimethyl-L-lysyl(27)-[histone H3] + 3 S-adenosyl-L-homocysteine + 3 H(+). Functionally, polycomb group (PcG) protein. Catalytic subunit of some PcG multiprotein complex, which methylates 'Lys-27' of histone H3, leading to transcriptional repression of the affected target genes. PcG proteins are not required to initiate repression, but to maintain it during later stages of development. This Zea mays (Maize) protein is Histone-lysine N-methyltransferase EZ2 (EZ2).